A 288-amino-acid polypeptide reads, in one-letter code: UPF0494 membrane protein C212.04c (288 aa).

4 consecutive transmembrane segments (helical) span residues 107–127 (WVLL…KFKI), 144–164 (IWGP…AFNY), 174–194 (PLIS…SVII), and 198–218 (IAGV…GVIA).

Belongs to the UPF0494 family.

It is found in the cytoplasm. Its subcellular location is the endoplasmic reticulum. It localises to the membrane. The polypeptide is UPF0494 membrane protein C212.04c (Schizosaccharomyces pombe (strain 972 / ATCC 24843) (Fission yeast)).